The following is a 473-amino-acid chain: Photosystem II CP43 reaction center protein (473 aa).

Positions 1 to 14 (MKTLYSLRRSYPVE) are excised as a propeptide. Position 15 is an N-acetylthreonine (threonine 15). Threonine 15 carries the phosphothreonine modification. 5 helical membrane-spanning segments follow: residues 69–93 (LFEV…PHLA), 134–155 (LIGP…KDRN), 178–200 (KALY…RKIT), 255–275 (KPFA…LSYS), and 291–312 (WFNN…ASQA). A [CaMn4O5] cluster-binding site is contributed by glutamate 367. A helical membrane pass occupies residues 447–471 (RARAAAAGFEKGIDRDFEPVLSMTP).

The protein belongs to the PsbB/PsbC family. PsbC subfamily. In terms of assembly, PSII is composed of 1 copy each of membrane proteins PsbA, PsbB, PsbC, PsbD, PsbE, PsbF, PsbH, PsbI, PsbJ, PsbK, PsbL, PsbM, PsbT, PsbX, PsbY, PsbZ, Psb30/Ycf12, at least 3 peripheral proteins of the oxygen-evolving complex and a large number of cofactors. It forms dimeric complexes. It depends on Binds multiple chlorophylls and provides some of the ligands for the Ca-4Mn-5O cluster of the oxygen-evolving complex. It may also provide a ligand for a Cl- that is required for oxygen evolution. PSII binds additional chlorophylls, carotenoids and specific lipids. as a cofactor.

The protein localises to the plastid. The protein resides in the chloroplast thylakoid membrane. Functionally, one of the components of the core complex of photosystem II (PSII). It binds chlorophyll and helps catalyze the primary light-induced photochemical processes of PSII. PSII is a light-driven water:plastoquinone oxidoreductase, using light energy to abstract electrons from H(2)O, generating O(2) and a proton gradient subsequently used for ATP formation. The chain is Photosystem II CP43 reaction center protein from Pinus thunbergii (Japanese black pine).